A 424-amino-acid polypeptide reads, in one-letter code: Glutamyl-tRNA(Gln) amidotransferase subunit D (424 aa).

Residues Gly56–Glu78 form a disordered region. The region spanning Pro84–Asp413 is the Asparaginase/glutaminase domain. Active-site residues include Thr94, Thr170, Asp171, and Lys247.

This sequence belongs to the asparaginase 1 family. GatD subfamily. As to quaternary structure, heterodimer of GatD and GatE.

The enzyme catalyses L-glutamyl-tRNA(Gln) + L-glutamine + ATP + H2O = L-glutaminyl-tRNA(Gln) + L-glutamate + ADP + phosphate + H(+). Allows the formation of correctly charged Gln-tRNA(Gln) through the transamidation of misacylated Glu-tRNA(Gln) in organisms which lack glutaminyl-tRNA synthetase. The reaction takes place in the presence of glutamine and ATP through an activated gamma-phospho-Glu-tRNA(Gln). The GatDE system is specific for glutamate and does not act on aspartate. This Methanosarcina acetivorans (strain ATCC 35395 / DSM 2834 / JCM 12185 / C2A) protein is Glutamyl-tRNA(Gln) amidotransferase subunit D.